A 165-amino-acid polypeptide reads, in one-letter code: Choriogonadotropin subunit beta (165 aa).

A signal peptide spans 1-20 (METLQGLLLWLLLSMGGAQA). Cystine bridges form between Cys29-Cys77, Cys43-Cys92, Cys46-Cys130, Cys54-Cys108, Cys58-Cys110, and Cys113-Cys120. N-linked (GlcNAc...) asparagine glycans are attached at residues Asn33 and Asn50. A disordered region spans residues 131–165 (DDPNLQASSSSKDPPPSPPSPSRLLEPAGTPFLPQ). Ser141, Ser147, and Ser152 each carry an O-linked (GalNAc...) serine glycan.

Belongs to the glycoprotein hormones subunit beta family. As to quaternary structure, heterodimer of a common alpha chain and a unique beta chain which confers biological specificity to thyrotropin, lutropin, follitropin and gonadotropin. Placenta.

It is found in the secreted. Functionally, stimulates the ovaries to synthesize the steroids that are essential for the maintenance of pregnancy. This chain is Choriogonadotropin subunit beta (CGB), found in Papio anubis (Olive baboon).